Here is a 129-residue protein sequence, read N- to C-terminus: Small ribosomal subunit protein uS11 (129 aa).

Belongs to the universal ribosomal protein uS11 family. As to quaternary structure, part of the 30S ribosomal subunit. Interacts with proteins S7 and S18. Binds to IF-3.

In terms of biological role, located on the platform of the 30S subunit, it bridges several disparate RNA helices of the 16S rRNA. Forms part of the Shine-Dalgarno cleft in the 70S ribosome. In Rhodopseudomonas palustris (strain BisB5), this protein is Small ribosomal subunit protein uS11.